A 117-amino-acid chain; its full sequence is Ig heavy chain V region J558 (117 aa).

The region spanning E1 to S116 is the Ig-like domain. C22 and C96 form a disulfide bridge.

The protein is Ig heavy chain V region J558 of Mus musculus (Mouse).